Reading from the N-terminus, the 1748-residue chain is Tight junction protein 1 (1748 aa).

One can recognise a PDZ 1 domain in the interval Thr23 to Lys110. Basic residues predominate over residues Ala102–Val112. Positions Ala102–Leu189 are disordered. Residues Pro123 to Ile136 are compositionally biased toward acidic residues. Position 125 is a phosphoserine (Ser125). A Phosphotyrosine modification is found at Tyr132. The segment covering Arg149–Ser175 has biased composition (basic and acidic residues). Ser175, Ser178, and Ser179 each carry phosphoserine. A Phosphothreonine modification is found at Thr185. Residues Lys186 to Glu264 enclose the PDZ 2 domain. 2 positions are modified to phosphoserine: Ser212 and Ser241. A Phosphothreonine modification is found at Thr267. 13 positions are modified to phosphoserine: Ser275, Ser277, Ser280, Ser284, Ser290, Ser294, Ser297, Ser300, Ser323, Ser329, Ser334, Ser337, and Ser353. Positions Leu295–Asp396 are disordered. The segment covering His299–Arg327 has biased composition (basic and acidic residues). Over residues Ser329–Leu338 the composition is skewed to polar residues. The residue at position 354 (Thr354) is a Phosphothreonine. Over residues Lys357–Lys377 the composition is skewed to basic and acidic residues. A PDZ 3 domain is found at Ser421–Lys502. The region spanning Gly516–Ala584 is the SH3 domain. Residues Arg598 to Asn779 enclose the Guanylate kinase-like domain. Ser617 and Ser622 each carry phosphoserine. Residues Tyr633–Arg876 form an occludin (OCLN)-binding region region. Residue Thr809 is modified to Phosphothreonine. Phosphoserine is present on residues Ser810 and Ser821. At Tyr822 the chain carries Phosphotyrosine. 3 positions are modified to phosphoserine: Ser824, Ser828, and Ser837. Disordered stretches follow at residues Ala825–Glu1081 and Asp1095–Asp1587. Phosphothreonine is present on residues Thr846, Thr848, Thr854, Thr861, and Thr868. Residues Glu879–Asn892 show a composition bias toward basic and acidic residues. The span at Gln893–Pro906 shows a compositional bias: low complexity. Ser912 bears the Phosphoserine mark. 2 stretches are compositionally biased toward polar residues: residues Pro934–Asn953 and Pro963–Thr979. Ser968 bears the Phosphoserine mark. A compositionally biased stretch (basic and acidic residues) spans Asp998 to Arg1014. The span at Tyr1061–Arg1072 shows a compositional bias: polar residues. Phosphoserine is present on residues Ser1071, Ser1111, and Ser1139. Basic and acidic residues predominate over residues His1110 to Glu1125. Phosphotyrosine is present on residues Tyr1140 and Tyr1165. The tract at residues Arg1151–Pro1371 is actin-binding region (ABR). 2 stretches are compositionally biased toward basic and acidic residues: residues Lys1269–Asn1286 and Pro1336–Asp1347. A Phosphotyrosine modification is found at Tyr1354. The residue at position 1366 (Ser1366) is a Phosphoserine. Residues Ser1389–Ser1400 are compositionally biased toward low complexity. The span at Lys1403–Glu1420 shows a compositional bias: basic and acidic residues. Ser1413 bears the Phosphoserine mark. Composition is skewed to polar residues over residues Asn1459 to Val1470 and Gly1512 to Pro1522. A compositionally biased stretch (basic and acidic residues) spans Pro1538–Lys1547. Residues Ser1545 and Ser1617 each carry the phosphoserine modification. In terms of domain architecture, ZU5 spans Ala1634–Phe1748.

Belongs to the MAGUK family. As to quaternary structure, homodimer. Forms heterodimers TJP3. Forms a heterodimer (via PDZ2 domain) with TJP2/ZO2 (via PDZ2 domain). Interacts with OCLN, CALM, claudins, CGN/cingulin, CXADR, GJA12, GJD3 and UBN1. Interacts (via ZU5 domain) with CDC42BPB and MYZAP. Interacts (via PDZ domain) with GJA1. Interacts (via PDZ domains) with ANKRD2. Interacts with POPDC1 (via the C-terminus cytoplasmic tail). Interacts with HSPA4 and KIRREL1. Interacts with DLL1. Interacts with USP53 (via the C-terminal region). Interacts (via ABR region) with F-actin. Interacts with DNMBP (via C-terminal domain); required for the apical cell-cell junction localization of DNMBP. Interacts with SPEF1. Interacts (via N-terminus) with CTNNA1. Interacts with CLDN18. Interacts with CLDN16 (via TRV motif); this is a prerequisite for anchoring of CLDN16 at the tight junction. Interacts with PKP1; the interaction facilitates TJP1/ZO-1 localization to the plasma membrane. Interacts with PATJ (via PDZ1-6 domains); the interaction is required for attachment and extension of TJP1/ZO1 condensates along the apical cell interface. Post-translationally, phosphorylated at tyrosine redidues in response to epidermal growth factor (EGF). This response is dependent on an intact actin microfilament system. Dephosphorylated by PTPRJ. As to expression, the alpha-containing isoform is found in most epithelial cell junctions. The short isoform is found both in endothelial cells and the highly specialized epithelial junctions of renal glomeruli and Sertoli cells of the seminiferous tubules.

It localises to the cell membrane. It is found in the cell junction. The protein localises to the tight junction. The protein resides in the gap junction. Its subcellular location is the cell projection. It localises to the podosome. TJP1, TJP2, and TJP3 are closely related scaffolding proteins that link tight junction (TJ) transmembrane proteins such as claudins, junctional adhesion molecules, and occludin to the actin cytoskeleton. Forms a multistranded TJP1/ZO1 condensate which elongates to form a tight junction belt, the belt is anchored at the apical cell membrane via interaction with PATJ. The tight junction acts to limit movement of substances through the paracellular space and as a boundary between the compositionally distinct apical and basolateral plasma membrane domains of epithelial and endothelial cells. Necessary for lumenogenesis, and particularly efficient epithelial polarization and barrier formation. Plays a role in the regulation of cell migration by targeting CDC42BPB to the leading edge of migrating cells. Plays an important role in podosome formation and associated function, thus regulating cell adhesion and matrix remodeling. With TJP2 and TJP3, participates in the junctional retention and stability of the transcription factor DBPA, but is not involved in its shuttling to the nucleus. May play a role in mediating cell morphology changes during ameloblast differentiation via its role in tight junctions. This Homo sapiens (Human) protein is Tight junction protein 1.